The chain runs to 118 residues: Large ribosomal subunit protein bL20 (118 aa).

Belongs to the bacterial ribosomal protein bL20 family.

Binds directly to 23S ribosomal RNA and is necessary for the in vitro assembly process of the 50S ribosomal subunit. It is not involved in the protein synthesizing functions of that subunit. The protein is Large ribosomal subunit protein bL20 of Proteus mirabilis (strain HI4320).